Reading from the N-terminus, the 162-residue chain is uncharacterized protein (162 aa).

An HTH asnC-type domain is found at 6 to 71; sequence LDDLDRAILK…PIKPRKLALV (66 aa). The H-T-H motif DNA-binding region spans 25 to 44; it reads IAEISNQLKKPESTVHFRIK.

This is an uncharacterized protein from Pyrococcus abyssi (strain GE5 / Orsay).